Here is a 45-residue protein sequence, read N- to C-terminus: Large ribosomal subunit protein bL34 (45 aa).

The protein belongs to the bacterial ribosomal protein bL34 family.

The chain is Large ribosomal subunit protein bL34 from Arthrobacter sp. (strain FB24).